The sequence spans 363 residues: 3-dehydroquinate synthase (363 aa).

Residues 103–107 (GAVGD), 127–128 (TT), lysine 139, lysine 148, and 166–169 (FSET) each bind NAD(+). Positions 181, 243, and 260 each coordinate Zn(2+).

It belongs to the sugar phosphate cyclases superfamily. Dehydroquinate synthase family. Co(2+) serves as cofactor. It depends on Zn(2+) as a cofactor. The cofactor is NAD(+).

The protein localises to the cytoplasm. The catalysed reaction is 7-phospho-2-dehydro-3-deoxy-D-arabino-heptonate = 3-dehydroquinate + phosphate. It functions in the pathway metabolic intermediate biosynthesis; chorismate biosynthesis; chorismate from D-erythrose 4-phosphate and phosphoenolpyruvate: step 2/7. In terms of biological role, catalyzes the conversion of 3-deoxy-D-arabino-heptulosonate 7-phosphate (DAHP) to dehydroquinate (DHQ). This is 3-dehydroquinate synthase from Lysinibacillus sphaericus (strain C3-41).